A 381-amino-acid chain; its full sequence is Endolytic peptidoglycan transglycosylase RlpA (381 aa).

The first 19 residues, 1–19 (MRKQLPVICVAAGIVLLAA), serve as a signal peptide directing secretion. Cysteine 20 carries N-palmitoyl cysteine lipidation. Cysteine 20 is lipidated: S-diacylglycerol cysteine. The interval 196-274 (LPPRPDLSGG…QPAPVSAPVA (79 aa)) is disordered. Residues 208 to 218 (SASSAPAQPQG) are compositionally biased toward low complexity. The SPOR domain maps to 304–380 (AAASGRFVVQ…AQLQSFIASA (77 aa)).

It belongs to the RlpA family.

The protein localises to the cell membrane. In terms of biological role, lytic transglycosylase with a strong preference for naked glycan strands that lack stem peptides. The chain is Endolytic peptidoglycan transglycosylase RlpA from Salmonella typhimurium (strain LT2 / SGSC1412 / ATCC 700720).